A 154-amino-acid chain; its full sequence is Transcriptional repressor NrdR (154 aa).

A zinc finger lies at C3–C34. Residues L49 to T139 enclose the ATP-cone domain.

This sequence belongs to the NrdR family. Requires Zn(2+) as cofactor.

In terms of biological role, negatively regulates transcription of bacterial ribonucleotide reductase nrd genes and operons by binding to NrdR-boxes. In Alkaliphilus oremlandii (strain OhILAs) (Clostridium oremlandii (strain OhILAs)), this protein is Transcriptional repressor NrdR.